The chain runs to 586 residues: Arginine--tRNA ligase (586 aa).

The 'HIGH' region motif lies at 128–138 (ANPTGPLHVGH).

It belongs to the class-I aminoacyl-tRNA synthetase family. In terms of assembly, monomer.

Its subcellular location is the cytoplasm. The catalysed reaction is tRNA(Arg) + L-arginine + ATP = L-arginyl-tRNA(Arg) + AMP + diphosphate. This is Arginine--tRNA ligase from Thioalkalivibrio sulfidiphilus (strain HL-EbGR7).